The following is a 229-amino-acid chain: MIMSSQQEKKDYDEEQLRLMEEVCIVVDENDVPLRYGTKKECHLMENINKGLLHRAFSMFIFDEQNRLLLQQRAEEKITFPSLWTNTCCSHPLDVAGERGNTLPEAVEGVKNAAQRKLFHELGIQAKYIPKDKFQFLTRIHYLAPSTGAWGEHEIDYILFFKGKVELDINPNEVQAYKYVTMEELKEMFSDPQYGFTPWFKLICEHFMFKWWQDVDHASKFQDTLIHRC.

Lys39 contributes to the substrate binding site. Positions 43 and 54 each coordinate Mg(2+). The Nudix hydrolase domain maps to 52 to 202; the sequence is LLHRAFSMFI…QYGFTPWFKL (151 aa). The substrate site is built by Gln72 and Lys77. Cys89 is an active-site residue. Ser90 is a binding site for substrate. The Mg(2+) site is built by Glu152 and Glu154. Glu154 is a catalytic residue.

This sequence belongs to the IPP isomerase type 1 family. It depends on Mg(2+) as a cofactor.

Its subcellular location is the cytoplasm. It localises to the nucleus. The enzyme catalyses isopentenyl diphosphate = dimethylallyl diphosphate. It functions in the pathway isoprenoid biosynthesis; dimethylallyl diphosphate biosynthesis; dimethylallyl diphosphate from isopentenyl diphosphate: step 1/1. Its function is as follows. Isopentenyl-diphosphate delta-isomerase; part of the second module of ergosterol biosynthesis pathway that includes the middle steps of the pathway. Idi1 catalyzes the 1,3-allylic rearrangement of isopentenyl (IPP) to its highly electrophilic allylic isomer, dimethylallyl diphosphate (DMAPP). The second module is carried out in the vacuole and involves the formation of farnesyl diphosphate, which is also an important intermediate in the biosynthesis of ubiquinone, dolichol, heme and prenylated proteins. Activity by the mevalonate kinase erg12 first converts mevalonate into 5-phosphomevalonate. 5-phosphomevalonate is then further converted to 5-diphosphomevalonate by the phosphomevalonate kinase erg8. The diphosphomevalonate decarboxylase mvd1 then produces isopentenyl diphosphate. The isopentenyl-diphosphate delta-isomerase idi1 then catalyzes the 1,3-allylic rearrangement of the homoallylic substrate isopentenyl (IPP) to its highly electrophilic allylic isomer, dimethylallyl diphosphate (DMAPP). Finally the farnesyl diphosphate synthase fps1 catalyzes the sequential condensation of isopentenyl pyrophosphate with dimethylallyl pyrophosphate, and then with the resultant geranylpyrophosphate to the ultimate product farnesyl pyrophosphate. This Schizosaccharomyces pombe (strain 972 / ATCC 24843) (Fission yeast) protein is Isopentenyl-diphosphate delta-isomerase.